Reading from the N-terminus, the 237-residue chain is 7-cyano-7-deazaguanine synthase (237 aa).

Position 14–24 (14–24 (FSGGQDSATCL)) interacts with ATP. Zn(2+) contacts are provided by Cys202, Cys217, Cys220, and Cys223.

The protein belongs to the QueC family. Zn(2+) is required as a cofactor.

The enzyme catalyses 7-carboxy-7-deazaguanine + NH4(+) + ATP = 7-cyano-7-deazaguanine + ADP + phosphate + H2O + H(+). It participates in purine metabolism; 7-cyano-7-deazaguanine biosynthesis. Its function is as follows. Catalyzes the ATP-dependent conversion of 7-carboxy-7-deazaguanine (CDG) to 7-cyano-7-deazaguanine (preQ(0)). The protein is 7-cyano-7-deazaguanine synthase of Rhodopseudomonas palustris (strain TIE-1).